The following is a 393-amino-acid chain: Prokineticin receptor 1 (393 aa).

Topologically, residues 1-62 are extracellular; it reads METTVGALGE…TNSRTFFAAK (62 aa). Asn-11 carries an N-linked (GlcNAc...) asparagine glycan. Residues 63 to 83 traverse the membrane as a helical segment; it reads IVIGMALVGIMLVCGIGNFIF. Over 84–98 the chain is Cytoplasmic; that stretch reads ITALARYKKLRNLTN. Residues 99–119 form a helical membrane-spanning segment; it reads LLIANLAISDFLVAIVCCPFE. The Extracellular portion of the chain corresponds to 120–146; sequence MDYYVVRQLSWEHGHVLCASVNYLRTV. A disulfide bridge connects residues Cys-137 and Cys-217. Residues 147-167 traverse the membrane as a helical segment; that stretch reads SLYVSTNALLAIAIDRYLAIV. Topologically, residues 168 to 179 are cytoplasmic; sequence HPLRPRMKCQTA. A helical transmembrane segment spans residues 180-200; the sequence is AGLIFLVWSVSILIAIPAAYF. At 201 to 232 the chain is on the extracellular side; it reads TTETVLVIVERQEKIFCGQIWPVDQQFYYRSY. Residues 233–253 form a helical membrane-spanning segment; it reads FLLVFGLEFVGPVVAMTLCYA. Over 254–282 the chain is Cytoplasmic; sequence RVSRELWFKAVPGFQTEQIRRRLRCRRRT. The helical transmembrane segment at 283-303 threads the bilayer; sequence VLGLVCVLSAYVLCWAPFYGF. Topologically, residues 304–322 are extracellular; sequence TIVRDFFPSVFVKEKHYLT. A helical transmembrane segment spans residues 323-343; sequence AFYVVECIAMSNSMINTLCFV. At 344 to 393 the chain is on the cytoplasmic side; the sequence is TVRNNTSKYLKRILRLQWRASPSGSKASADLDLRTTGIPATEEVDCIRLK.

The protein belongs to the G-protein coupled receptor 1 family. As to expression, expressed at high levels in the heart, skeletal muscle and pancreas. Expressed at lower levels in the brain, lung, liver and kidney.

It localises to the cell membrane. In terms of biological role, receptor for prokineticin 1. Exclusively coupled to the G(q) subclass of heteromeric G proteins. Activation leads to mobilization of calcium, stimulation of phosphoinositide turnover and activation of p44/p42 mitogen-activated protein kinase. May play a role during early pregnancy. The chain is Prokineticin receptor 1 (Prokr1) from Mus musculus (Mouse).